A 138-amino-acid polypeptide reads, in one-letter code: Large ribosomal subunit protein uL16 (138 aa).

It belongs to the universal ribosomal protein uL16 family. As to quaternary structure, part of the 50S ribosomal subunit.

In terms of biological role, binds 23S rRNA and is also seen to make contacts with the A and possibly P site tRNAs. This chain is Large ribosomal subunit protein uL16, found in Anaeromyxobacter dehalogenans (strain 2CP-C).